A 238-amino-acid chain; its full sequence is MKTLLVFDFDHTIINDNSDTWIVQCVPGKKLPNGLQNSYEKGKWTEYMGRVFSYLGEQGIREEDMKRIMIAIPYTPGMTDLLHFIGQNKDSFDCIIISDSNTIFIDWILTHANVHNVFDKVFTNPAAFDSVGNLTVQNFHVHHCTTCPTNLCKKKVLEEFVAKQSSNSAHYSKIVYVGDGGNDLCPVTFLKKGDIAMPRAGYTLDKHIAKDVTLVDSTISVWSTGAEILSHLKLLLEH.

D8 (nucleophile) is an active-site residue. Positions 8 and 10 each coordinate Mg(2+). D10 serves as the catalytic Proton donor. Substrate is bound by residues D19 and D99. A Mg(2+)-binding site is contributed by D179.

The protein belongs to the HAD-like hydrolase superfamily. PHOSPHO family. Mg(2+) is required as a cofactor.

Functionally, probable phosphatase. This is Probable phosphatase phospho2 (phospho2) from Xenopus tropicalis (Western clawed frog).